The chain runs to 316 residues: Ribose-phosphate pyrophosphokinase (316 aa).

ATP-binding positions include 41 to 43 (DGE) and 100 to 101 (RQ). Positions 134 and 175 each coordinate Mg(2+). Lys198 is an active-site residue. D-ribose 5-phosphate is bound by residues Arg200, Asp224, and 228–232 (DTARS).

It belongs to the ribose-phosphate pyrophosphokinase family. Class I subfamily. Homohexamer. The cofactor is Mg(2+).

It localises to the cytoplasm. The enzyme catalyses D-ribose 5-phosphate + ATP = 5-phospho-alpha-D-ribose 1-diphosphate + AMP + H(+). It participates in metabolic intermediate biosynthesis; 5-phospho-alpha-D-ribose 1-diphosphate biosynthesis; 5-phospho-alpha-D-ribose 1-diphosphate from D-ribose 5-phosphate (route I): step 1/1. In terms of biological role, involved in the biosynthesis of the central metabolite phospho-alpha-D-ribosyl-1-pyrophosphate (PRPP) via the transfer of pyrophosphoryl group from ATP to 1-hydroxyl of ribose-5-phosphate (Rib-5-P). The chain is Ribose-phosphate pyrophosphokinase from Thermosipho africanus (strain TCF52B).